The chain runs to 384 residues: 4-hydroxy-3-methylbut-2-en-1-yl diphosphate synthase (flavodoxin) (384 aa).

Positions 280, 283, 315, and 322 each coordinate [4Fe-4S] cluster.

This sequence belongs to the IspG family. The cofactor is [4Fe-4S] cluster.

The catalysed reaction is (2E)-4-hydroxy-3-methylbut-2-enyl diphosphate + oxidized [flavodoxin] + H2O + 2 H(+) = 2-C-methyl-D-erythritol 2,4-cyclic diphosphate + reduced [flavodoxin]. The protein operates within isoprenoid biosynthesis; isopentenyl diphosphate biosynthesis via DXP pathway; isopentenyl diphosphate from 1-deoxy-D-xylulose 5-phosphate: step 5/6. Converts 2C-methyl-D-erythritol 2,4-cyclodiphosphate (ME-2,4cPP) into 1-hydroxy-2-methyl-2-(E)-butenyl 4-diphosphate. The polypeptide is 4-hydroxy-3-methylbut-2-en-1-yl diphosphate synthase (flavodoxin) (Frankia casuarinae (strain DSM 45818 / CECT 9043 / HFP020203 / CcI3)).